Here is a 306-residue protein sequence, read N- to C-terminus: Pseudouridine-5'-phosphate glycosidase (306 aa).

Glu-27 acts as the Proton donor in catalysis. Lys-88 and Val-108 together coordinate substrate. Asp-140 contacts Mn(2+). 142-144 (SAD) contacts substrate. Lys-161 acts as the Nucleophile in catalysis.

It belongs to the pseudouridine-5'-phosphate glycosidase family. Homotrimer. It depends on Mn(2+) as a cofactor.

It catalyses the reaction D-ribose 5-phosphate + uracil = psi-UMP + H2O. Catalyzes the reversible cleavage of pseudouridine 5'-phosphate (PsiMP) to ribose 5-phosphate and uracil. Functions biologically in the cleavage direction, as part of a pseudouridine degradation pathway. This is Pseudouridine-5'-phosphate glycosidase from Petrotoga mobilis (strain DSM 10674 / SJ95).